The sequence spans 189 residues: Interferon alpha-D (189 aa).

Residues 1–23 (MAPAWSLLLALLLLSCNAICSLG) form the signal peptide. 2 cysteine pairs are disulfide-bonded: cysteine 24–cysteine 122 and cysteine 52–cysteine 162.

This sequence belongs to the alpha/beta interferon family.

The protein localises to the secreted. Its function is as follows. Produced by macrophages, IFN-alpha have antiviral activities. Interferon stimulates the production of two enzymes: a protein kinase and an oligoadenylate synthetase. The protein is Interferon alpha-D (IFNAD) of Bos taurus (Bovine).